Here is a 265-residue protein sequence, read N- to C-terminus: Uridylate kinase (265 aa).

The interval 1–29 (MTESREPHVAGSAAPRPEPANGLASGQPS) is disordered. Residue 40–43 (KLGG) coordinates ATP. Gly-81 serves as a coordination point for UMP. Positions 82 and 86 each coordinate ATP. Residues Asp-101 and 162–169 (MGLPYFST) each bind UMP. Phe-195 and Asp-198 together coordinate ATP.

This sequence belongs to the UMP kinase family. Homohexamer.

The protein localises to the cytoplasm. The enzyme catalyses UMP + ATP = UDP + ADP. It participates in pyrimidine metabolism; CTP biosynthesis via de novo pathway; UDP from UMP (UMPK route): step 1/1. Its activity is regulated as follows. Inhibited by UTP. In terms of biological role, catalyzes the reversible phosphorylation of UMP to UDP. The polypeptide is Uridylate kinase (Mycobacterium avium (strain 104)).